The primary structure comprises 345 residues: Ryncolin-4 (345 aa).

The N-terminal stretch at 1-19 (MKPWAAFHLIFLVASSLEG) is a signal peptide. Residues 48–118 (ILQSQPGIPG…DKGDKGEDCN (71 aa)) form a disordered region. The 58-residue stretch at 57 to 114 (GIPGVPGTNGSEGLKGDPGPQGPPGIRGPDGIRGEAGPKGDKGDQGDKGDKGDKGDKG) folds into the Collagen-like domain. Residues 86–116 (DGIRGEAGPKGDKGDQGDKGDKGDKGDKGED) are compositionally biased toward basic and acidic residues. Residues 121-339 (DCLPTEVRNC…YADMKIRPQK (219 aa)) form the Fibrinogen C-terminal domain. Cystine bridges form between Cys-130/Cys-158 and Cys-282/Cys-295.

It belongs to the ficolin lectin family. Veficolin subfamily. In terms of processing, hydroxylated, possibly at Pro-80. Expressed by the venom duct.

The protein resides in the secreted. Initiates complement activation and/or interferes in platelet aggregation and/or blood coagulation. This is Ryncolin-4 from Cerberus rynchops (Dog-faced water snake).